Reading from the N-terminus, the 1400-residue chain is Tiny macrocysts protein C (1400 aa).

8 helical membrane-spanning segments follow: residues 59–79, 112–132, 152–172, 196–216, 240–260, 266–286, 296–316, and 320–340; these read ILTI…GFKQ, IFFW…WYVA, FVST…LIGL, ANLS…IVGF, FDVY…LVDF, SIVY…ILPY, SGFY…MGIN, and TATT…IGYF. Disordered stretches follow at residues 367–393 and 683–712; these read FNEI…SKVT and ERSG…RGKY. A compositionally biased stretch (basic and acidic residues) spans 369–386; it reads EITKNEKSKTGDSKEKES. Helical transmembrane passes span 726–746, 975–995, 1162–1182, and 1342–1362; these read WLMI…LIVL, TMLY…AVLF, VLAI…TYSV, and VLTS…LLLF.

It is found in the membrane. The chain is Tiny macrocysts protein C (tmcC) from Dictyostelium discoideum (Social amoeba).